The primary structure comprises 390 residues: LL-diaminopimelate aminotransferase (390 aa).

Tyr13, Gly38, Lys102, Tyr126, and Asn176 together coordinate substrate. Residues 101–102 (SK), Tyr126, Asn176, Tyr207, and 235–237 (SVS) contribute to the pyridoxal 5'-phosphate site. N6-(pyridoxal phosphate)lysine is present on Lys238. Arg246 contributes to the pyridoxal 5'-phosphate binding site. Arg364 is a binding site for substrate.

The protein belongs to the class-I pyridoxal-phosphate-dependent aminotransferase family. LL-diaminopimelate aminotransferase subfamily. Homodimer. Requires pyridoxal 5'-phosphate as cofactor.

It carries out the reaction (2S,6S)-2,6-diaminopimelate + 2-oxoglutarate = (S)-2,3,4,5-tetrahydrodipicolinate + L-glutamate + H2O + H(+). It participates in amino-acid biosynthesis; L-lysine biosynthesis via DAP pathway; LL-2,6-diaminopimelate from (S)-tetrahydrodipicolinate (aminotransferase route): step 1/1. Its function is as follows. Involved in the synthesis of meso-diaminopimelate (m-DAP or DL-DAP), required for both lysine and peptidoglycan biosynthesis. Catalyzes the direct conversion of tetrahydrodipicolinate to LL-diaminopimelate. Is also able to catalyze the reverse reaction in vitro, i.e. the transamination of LL-diaminopimelate with 2-oxoglutarate to produce tetrahydrodipicolinate and glutamate. Can also use m-DAP instead of LL-DAP as the amino-group donor, and oxaloacetate instead of 2-oxoglutarate as the amino-group acceptor. This is LL-diaminopimelate aminotransferase from Moorella thermoacetica (strain ATCC 39073 / JCM 9320).